A 636-amino-acid polypeptide reads, in one-letter code: Epithelial sodium channel subunit alpha (636 aa).

A disordered region spans residues 1–28 (MKSENQPEDKRIGKLKREANMQKMKEAA). The Cytoplasmic segment spans residues 1–77 (MKSENQPEDK…VCSKKNRMKT (77 aa)). The chain crosses the membrane as a helical span at residues 78–98 (AFWSILFFFTFGLMYWQFGII). Residues 99–549 (YREYFSFPVN…SQWSLWFGSS (451 aa)) are Extracellular-facing. Cystine bridges form between Cys-126–Cys-293, Cys-218–Cys-225, Cys-270–Cys-277, Cys-381–Cys-466, Cys-403–Cys-443, Cys-403–Cys-462, Cys-407–Cys-458, Cys-416–Cys-443, Cys-416–Cys-466, and Cys-418–Cys-432. A helical membrane pass occupies residues 550–570 (VLSVVELVELILDFIAITCIL). Residues 571–636 (AIHWLNMNRS…LRRVSSQQTE (66 aa)) are Cytoplasmic-facing.

It belongs to the amiloride-sensitive sodium channel (TC 1.A.6) family. SCNN1A subfamily. In terms of assembly, heterotrimer; containing an alpha/SCNN1A, a beta/SCNN1B and a gamma/SCNN1G subunit.

It is found in the apical cell membrane. It localises to the cell projection. Its subcellular location is the cilium. The protein resides in the cytoplasmic granule. The protein localises to the cytoplasm. It is found in the cytoplasmic vesicle. It localises to the secretory vesicle. Its subcellular location is the acrosome. The protein resides in the flagellum. The enzyme catalyses Na(+)(in) = Na(+)(out). With respect to regulation, originally identified and characterized by its inhibition by the diuretic drug amiloride. This is one of the three pore-forming subunits of the heterotrimeric epithelial sodium channel (ENaC), a critical regulator of sodium balance and fluid homeostasis. ENaC operates in epithelial tissues, where it mediates the electrodiffusion of sodium ions from extracellular fluid through the apical membrane of cells, with water following osmotically. The sequence is that of Epithelial sodium channel subunit alpha from Anolis carolinensis (Green anole).